The chain runs to 285 residues: N(G),N(G)-dimethylarginine dimethylaminohydrolase 1 (285 aa).

Position 2 is an N-acetylalanine (Ala-2). Leu-30 is a binding site for substrate. Ser-33 is modified (phosphoserine). Asp-73, Glu-78, Asp-79, Arg-98, and Arg-145 together coordinate substrate. His-173 acts as the Proton donor in catalysis. Cys-222 carries the post-translational modification S-nitrosocysteine. A substrate-binding site is contributed by Val-268. The residue at position 274 (Cys-274) is an S-nitrosocysteine. Cys-274 (nucleophile) is an active-site residue. Zn(2+) is bound at residue Cys-274.

Belongs to the DDAH family. As to quaternary structure, monomer. In terms of tissue distribution, detected in skeletal muscle, lung, heart, liver, kidney and brain (at protein level).

The enzyme catalyses N(omega),N(omega)-dimethyl-L-arginine + H2O = dimethylamine + L-citrulline. It carries out the reaction N(omega)-methyl-L-arginine + H2O = L-citrulline + methylamine. Its activity is regulated as follows. Inhibited by zinc ions. In terms of biological role, hydrolyzes N(G),N(G)-dimethyl-L-arginine (ADMA) and N(G)-monomethyl-L-arginine (MMA) which act as inhibitors of NOS. Has therefore a role in the regulation of nitric oxide generation. This Mus musculus (Mouse) protein is N(G),N(G)-dimethylarginine dimethylaminohydrolase 1 (Ddah1).